A 271-amino-acid polypeptide reads, in one-letter code: uncharacterized protein (271 aa).

Belongs to the anhydro-N-acetylmuramic acid kinase family.

This is an uncharacterized protein from Yersinia enterocolitica.